The primary structure comprises 394 residues: 1-deoxy-D-xylulose 5-phosphate reductoisomerase (394 aa).

Positions 13, 14, 15, 16, 40, 41, and 127 each coordinate NADPH. Lys-128 contributes to the 1-deoxy-D-xylulose 5-phosphate binding site. Position 129 (Glu-129) interacts with NADPH. Mn(2+) is bound at residue Asp-153. Positions 154, 155, 184, and 207 each coordinate 1-deoxy-D-xylulose 5-phosphate. Glu-155 is a binding site for Mn(2+). Gly-213 is a binding site for NADPH. 1-deoxy-D-xylulose 5-phosphate is bound by residues Ser-220, Asn-225, Lys-226, and Glu-229. A Mn(2+)-binding site is contributed by Glu-229.

It belongs to the DXR family. It depends on Mg(2+) as a cofactor. Requires Mn(2+) as cofactor.

The enzyme catalyses 2-C-methyl-D-erythritol 4-phosphate + NADP(+) = 1-deoxy-D-xylulose 5-phosphate + NADPH + H(+). It participates in isoprenoid biosynthesis; isopentenyl diphosphate biosynthesis via DXP pathway; isopentenyl diphosphate from 1-deoxy-D-xylulose 5-phosphate: step 1/6. In terms of biological role, catalyzes the NADPH-dependent rearrangement and reduction of 1-deoxy-D-xylulose-5-phosphate (DXP) to 2-C-methyl-D-erythritol 4-phosphate (MEP). This chain is 1-deoxy-D-xylulose 5-phosphate reductoisomerase, found in Chromobacterium violaceum (strain ATCC 12472 / DSM 30191 / JCM 1249 / CCUG 213 / NBRC 12614 / NCIMB 9131 / NCTC 9757 / MK).